Reading from the N-terminus, the 359-residue chain is 3-dehydroquinate synthase (359 aa).

NAD(+)-binding positions include 69-74 (DGEQHK), 103-107 (GVIGD), 127-128 (TT), Lys140, Lys149, and 167-170 (TLDT). The Zn(2+) site is built by Glu182, His245, and His262.

It belongs to the sugar phosphate cyclases superfamily. Dehydroquinate synthase family. Co(2+) serves as cofactor. Requires Zn(2+) as cofactor. The cofactor is NAD(+).

It localises to the cytoplasm. It carries out the reaction 7-phospho-2-dehydro-3-deoxy-D-arabino-heptonate = 3-dehydroquinate + phosphate. The protein operates within metabolic intermediate biosynthesis; chorismate biosynthesis; chorismate from D-erythrose 4-phosphate and phosphoenolpyruvate: step 2/7. Functionally, catalyzes the conversion of 3-deoxy-D-arabino-heptulosonate 7-phosphate (DAHP) to dehydroquinate (DHQ). The polypeptide is 3-dehydroquinate synthase (Nitrosococcus oceani (strain ATCC 19707 / BCRC 17464 / JCM 30415 / NCIMB 11848 / C-107)).